The primary structure comprises 284 residues: Ribose-5-phosphate isomerase (284 aa).

It belongs to the ribose 5-phosphate isomerase family.

It is found in the cytoplasm. The enzyme catalyses aldehydo-D-ribose 5-phosphate = D-ribulose 5-phosphate. Its pathway is carbohydrate degradation; pentose phosphate pathway; D-ribose 5-phosphate from D-ribulose 5-phosphate (non-oxidative stage): step 1/1. The protein is Ribose-5-phosphate isomerase (RKI1) of Lodderomyces elongisporus (strain ATCC 11503 / CBS 2605 / JCM 1781 / NBRC 1676 / NRRL YB-4239) (Yeast).